Consider the following 332-residue polypeptide: Sphingolipid delta(4)-desaturase DES1-like (332 aa).

The next 3 helical transmembrane spans lie at 55-75 (PWAFLKITLVVILQLSTAAIL), 83-103 (ILSIAYFFGSFLNHNLFLAIH), and 119-139 (CLGIFANLPIGVPMSVTFQKY). The short motif at 103-107 (HELSH) is the Histidine box-1 element. The Histidine box-2 motif lies at 140–144 (HLEHH). Transmembrane regions (helical) follow at residues 164–184 (LVTNIFAKTIWVFLQLFFYAL), 197–217 (WEFINFLIQIVLDVSVVLFFG), and 222–242 (AYLILSTFVGGGMHPMAGHFI). Residues 271–275 (HNEHH) carry the Histidine box-3 motif.

This sequence belongs to the fatty acid desaturase type 1 family. DEGS subfamily. As to expression, specifically expressed in flowers.

The protein localises to the endoplasmic reticulum membrane. The enzyme catalyses an N-acylsphinganine + 2 Fe(II)-[cytochrome b5] + O2 + 2 H(+) = an N-acylsphing-4-enine + 2 Fe(III)-[cytochrome b5] + 2 H2O. Functionally, sphingolipid-delta-4-desaturase required for the biosynthesis of delta-4-unsaturated sphingolipids and derivatives. May be required for the biosynthesis of glucosylceramides. The sequence is that of Sphingolipid delta(4)-desaturase DES1-like from Arabidopsis thaliana (Mouse-ear cress).